A 637-amino-acid polypeptide reads, in one-letter code: Chaperone protein HtpG (637 aa).

The segment at 1–345 (MSQQETHGFQ…SNDLPLNVSR (345 aa)) is a; substrate-binding. Residues 346–562 (EILQDNHITK…EGEMSTQMIK (217 aa)) are b. A c region spans residues 563–637 (LMQAAGQPVP…MNQMLLANMK (75 aa)).

It belongs to the heat shock protein 90 family. In terms of assembly, homodimer.

It is found in the cytoplasm. In terms of biological role, molecular chaperone. Has ATPase activity. The sequence is that of Chaperone protein HtpG from Shewanella sp. (strain W3-18-1).